Consider the following 397-residue polypeptide: MSKPFVPTPNISRPATPSSLDYGKDEASSTLLRDMGERGDRERKDREERDKKEAMPSGQDQVLPILSYCAASIMMTVVNKYVVSGANFTMTFLLLAIQSSVCVLAVTTVKKLGFISFRDFDKNDAKAWWPISTLLVAVIYTGSKALQFLSIPVYTIFKNLTIILIAYGEVFMFNGAVSGLTLCSFALMVGSSIIAAWSDITSVWNKEPELDPITGLEITVGPVSTIGGLNAGYIWMALNCFVSAAYVLFMRKRIKVTGFKDWDSMYYNNLLSIPILVVFSLVIEDWGSESLALNFPASNRVLLLSAMAFSGAAAVFISYSTAWCVRITGSTTYSMVGALNKLPVAASGILFFGDPANFGNISAIAVGGVAGVVYAVAKTNQAKVEKARQARAAGGRP.

The segment at Met1–Ser57 is disordered. The Cytoplasmic segment spans residues Met1–Gln61. The span at Pro9 to Ser19 shows a compositional bias: polar residues. The span at Asp34–Ala54 shows a compositional bias: basic and acidic residues. The chain crosses the membrane as a helical span at residues Val62–Val82. At Val83–Asn87 the chain is on the lumenal side. An N-linked (GlcNAc...) asparagine glycan is attached at Asn87. A helical transmembrane segment spans residues Phe88–Thr108. Residues Val109–Asp124 are Cytoplasmic-facing. The chain crosses the membrane as a helical span at residues Ala125–Gly142. At Ser143 to Ala145 the chain is on the lumenal side. The chain crosses the membrane as a helical span at residues Leu146–Gly168. Topologically, residues Glu169–Asn174 are cytoplasmic. The chain crosses the membrane as a helical span at residues Gly175 to Trp197. Topologically, residues Ser198 to Gly228 are lumenal. The chain crosses the membrane as a helical span at residues Leu229 to Phe249. Residues Met250–Ser272 lie on the Cytoplasmic side of the membrane. A helical membrane pass occupies residues Ile273–Leu293. The Lumenal segment spans residues Asn294–Arg300. Residues Val301–Thr321 traverse the membrane as a helical segment. Residues Ala322–Thr332 are Cytoplasmic-facing. Residues Tyr333–Gly353 traverse the membrane as a helical segment. Residues Asp354–Pro355 are Lumenal-facing. The helical transmembrane segment at Ala356–Val376 threads the bilayer. Topologically, residues Ala377–Pro397 are cytoplasmic.

The protein belongs to the TPT transporter family. SLC35D subfamily. As to quaternary structure, homooligomer.

The protein localises to the golgi apparatus membrane. It localises to the cytoplasmic vesicle membrane. The protein resides in the endoplasmic reticulum membrane. Its function is as follows. Involved in the import of GDP-mannose from the cytoplasm into the Golgi lumen. Involved in capsule synthesis. This is GDP-mannose transporter 1 (GMT1) from Cryptococcus neoformans var. neoformans serotype D (strain B-3501A) (Filobasidiella neoformans).